We begin with the raw amino-acid sequence, 230 residues long: Cytidylate kinase (230 aa).

An ATP-binding site is contributed by G11–T19.

This sequence belongs to the cytidylate kinase family. Type 1 subfamily.

It localises to the cytoplasm. It catalyses the reaction CMP + ATP = CDP + ADP. The enzyme catalyses dCMP + ATP = dCDP + ADP. This chain is Cytidylate kinase, found in Oceanobacillus iheyensis (strain DSM 14371 / CIP 107618 / JCM 11309 / KCTC 3954 / HTE831).